Consider the following 156-residue polypeptide: Flagellar assembly factor FliW (156 aa).

This sequence belongs to the FliW family. As to quaternary structure, interacts with translational regulator CsrA and flagellin(s).

The protein resides in the cytoplasm. Its function is as follows. Acts as an anti-CsrA protein, binds CsrA and prevents it from repressing translation of its target genes, one of which is flagellin. Binds to flagellin and participates in the assembly of the flagellum. The sequence is that of Flagellar assembly factor FliW from Pseudothermotoga lettingae (strain ATCC BAA-301 / DSM 14385 / NBRC 107922 / TMO) (Thermotoga lettingae).